Consider the following 64-residue polypeptide: Alpha-conotoxin-like Lp1.8 (64 aa).

The signal sequence occupies residues 1-21 (MGMRMMFTMFLLVVLTTTVVS). The propeptide occupies 22–41 (FNSDRESNHENRRTSNQITR). 2 cysteine pairs are disulfide-bonded: C47–C53 and C48–C61. A lacks the Ser-Xaa-Pro motif that is crucial for potent interaction with nAChR region spans residues 49–51 (KDP).

The protein belongs to the conotoxin A superfamily. As to expression, expressed by the venom duct.

It localises to the secreted. Its function is as follows. Alpha-conotoxins act on postsynaptic membranes, they bind to the nicotinic acetylcholine receptors (nAChR) and thus inhibit them. Has possibly a distinct nAChR binding mode from other alpha-conotoxins, due to a different three residue motif (Lys-Xaa-Pro instead of the conserved Ser-Xaa-Pro motif). This is Alpha-conotoxin-like Lp1.8 from Conus leopardus (Leopard cone).